Consider the following 186-residue polypeptide: Ribosome maturation factor RimM (186 aa).

A PRC barrel domain is found at 93 to 168 (EDDFYLVDLI…VLIDPPQEEN (76 aa)). The segment at 163–186 (PPQEENAPEFGRNELGHDDGGEAA) is disordered. Residues 173–186 (GRNELGHDDGGEAA) show a composition bias toward basic and acidic residues.

This sequence belongs to the RimM family. As to quaternary structure, binds ribosomal protein uS19.

Its subcellular location is the cytoplasm. An accessory protein needed during the final step in the assembly of 30S ribosomal subunit, possibly for assembly of the head region. Essential for efficient processing of 16S rRNA. May be needed both before and after RbfA during the maturation of 16S rRNA. It has affinity for free ribosomal 30S subunits but not for 70S ribosomes. This is Ribosome maturation factor RimM from Granulibacter bethesdensis (strain ATCC BAA-1260 / CGDNIH1).